The sequence spans 482 residues: Bifunctional protein GlmU (482 aa).

Residues 1–238 (MSAIRPAAVV…HREIAGINNR (238 aa)) form a pyrophosphorylase region. Residues 12–15 (LAAG), K26, Q79, and 84–85 (GT) each bind UDP-N-acetyl-alpha-D-glucosamine. D110 serves as a coordination point for Mg(2+). Positions 147, 163, 178, and 236 each coordinate UDP-N-acetyl-alpha-D-glucosamine. N236 contacts Mg(2+). Residues 239 to 259 (VQLAEARRILNDRLLTRAMLA) form a linker region. Residues 260-482 (GVTVVDPATT…VASRKPEGED (223 aa)) form an N-acetyltransferase region. R341 and K359 together coordinate UDP-N-acetyl-alpha-D-glucosamine. Residue H371 is the Proton acceptor of the active site. UDP-N-acetyl-alpha-D-glucosamine-binding residues include Y374 and N385. Acetyl-CoA is bound by residues A388, 394–395 (NY), S413, A431, and R448.

This sequence in the N-terminal section; belongs to the N-acetylglucosamine-1-phosphate uridyltransferase family. In the C-terminal section; belongs to the transferase hexapeptide repeat family. Homotrimer. It depends on Mg(2+) as a cofactor.

The protein localises to the cytoplasm. It catalyses the reaction alpha-D-glucosamine 1-phosphate + acetyl-CoA = N-acetyl-alpha-D-glucosamine 1-phosphate + CoA + H(+). The enzyme catalyses N-acetyl-alpha-D-glucosamine 1-phosphate + UTP + H(+) = UDP-N-acetyl-alpha-D-glucosamine + diphosphate. The protein operates within nucleotide-sugar biosynthesis; UDP-N-acetyl-alpha-D-glucosamine biosynthesis; N-acetyl-alpha-D-glucosamine 1-phosphate from alpha-D-glucosamine 6-phosphate (route II): step 2/2. Its pathway is nucleotide-sugar biosynthesis; UDP-N-acetyl-alpha-D-glucosamine biosynthesis; UDP-N-acetyl-alpha-D-glucosamine from N-acetyl-alpha-D-glucosamine 1-phosphate: step 1/1. It participates in bacterial outer membrane biogenesis; LPS lipid A biosynthesis. Functionally, catalyzes the last two sequential reactions in the de novo biosynthetic pathway for UDP-N-acetylglucosamine (UDP-GlcNAc). The C-terminal domain catalyzes the transfer of acetyl group from acetyl coenzyme A to glucosamine-1-phosphate (GlcN-1-P) to produce N-acetylglucosamine-1-phosphate (GlcNAc-1-P), which is converted into UDP-GlcNAc by the transfer of uridine 5-monophosphate (from uridine 5-triphosphate), a reaction catalyzed by the N-terminal domain. The polypeptide is Bifunctional protein GlmU (Streptomyces avermitilis (strain ATCC 31267 / DSM 46492 / JCM 5070 / NBRC 14893 / NCIMB 12804 / NRRL 8165 / MA-4680)).